A 175-amino-acid chain; its full sequence is Peptide deformylase (175 aa).

Residues C96 and H138 each coordinate Fe cation. E139 is a catalytic residue. H142 contributes to the Fe cation binding site.

This sequence belongs to the polypeptide deformylase family. Fe(2+) is required as a cofactor.

It carries out the reaction N-terminal N-formyl-L-methionyl-[peptide] + H2O = N-terminal L-methionyl-[peptide] + formate. In terms of biological role, removes the formyl group from the N-terminal Met of newly synthesized proteins. Requires at least a dipeptide for an efficient rate of reaction. N-terminal L-methionine is a prerequisite for activity but the enzyme has broad specificity at other positions. This is Peptide deformylase from Campylobacter jejuni subsp. jejuni serotype O:2 (strain ATCC 700819 / NCTC 11168).